Consider the following 1802-residue polypeptide: Transposon Ty4-H Gag-Pol polyprotein (1802 aa).

A coiled-coil region spans residues Arg39 to Asn115. The tract at residues Asn381 to Tyr501 is ty4 protease. The active-site For protease activity; shared with dimeric partner is Asp414. The integrase-type zinc finger-like stretch occupies residues Ala539–Cys599. One can recognise an Integrase catalytic domain in the interval Thr619–Pro786. Mg(2+) is bound by residues Asp630 and Asp695. The disordered stretch occupies residues Lys1223–Lys1248. A Reverse transcriptase Ty1/copia-type domain is found at Arg1375 to Asn1510. Mg(2+)-binding residues include Asp1383, Asp1462, Asp1463, Asp1644, Glu1686, and Asp1720. The 147-residue stretch at Asp1644–Lys1790 folds into the RNase H Ty1/copia-type domain.

The protease is a homodimer, whose active site consists of two apposed aspartic acid residues. In terms of processing, proteolytically processed into capsid protein (CA), Ty4 protease (PR), integrase (IN) and reverse transcriptase/ribonuclease H (RT) proteins. Initially, virus-like particles (VLPs) are composed of the structural unprocessed proteins Gag and Gag-Pol, and also contain the host initiator methionine tRNA (tRNA(i)-Met) which serves as a primer for minus-strand DNA synthesis, and a dimer of genomic Ty RNA. Processing of the polyproteins occurs within the particle and proceeds by an ordered pathway, called maturation. First, the protease (PR) is released by autocatalytic cleavage of the Gag-Pol polyprotein, and this cleavage is a prerequisite for subsequent processing at the remaining sites to release the mature structural and catalytic proteins. Maturation takes place prior to the RT reaction and is required to produce transposition-competent VLPs.

Its subcellular location is the cytoplasm. It localises to the nucleus. It carries out the reaction DNA(n) + a 2'-deoxyribonucleoside 5'-triphosphate = DNA(n+1) + diphosphate. It catalyses the reaction Endonucleolytic cleavage to 5'-phosphomonoester.. Functionally, capsid protein (CA) is the structural component of the virus-like particle (VLP), forming the shell that encapsulates the retrotransposons dimeric RNA genome. The aspartyl protease (PR) mediates the proteolytic cleavages of the Gag and Gag-Pol polyproteins after assembly of the VLP. Its function is as follows. Reverse transcriptase/ribonuclease H (RT) is a multifunctional enzyme that catalyzes the conversion of the retro-elements RNA genome into dsDNA within the VLP. The enzyme displays a DNA polymerase activity that can copy either DNA or RNA templates, and a ribonuclease H (RNase H) activity that cleaves the RNA strand of RNA-DNA heteroduplexes during plus-strand synthesis and hydrolyzes RNA primers. The conversion leads to a linear dsDNA copy of the retrotransposon that includes long terminal repeats (LTRs) at both ends. In terms of biological role, integrase (IN) targets the VLP to the nucleus, where a subparticle preintegration complex (PIC) containing at least integrase and the newly synthesized dsDNA copy of the retrotransposon must transit the nuclear membrane. Once in the nucleus, integrase performs the integration of the dsDNA into the host genome. In Saccharomyces cerevisiae (strain ATCC 204508 / S288c) (Baker's yeast), this protein is Transposon Ty4-H Gag-Pol polyprotein (TY4B-H).